The chain runs to 611 residues: Pseudomonine synthase PmsE (611 aa).

The region spanning 533-608 (VSVENTRTWL…SWWALVEARQ (76 aa)) is the Carrier domain. The residue at position 569 (Ser-569) is an O-(pantetheine 4'-phosphoryl)serine.

This sequence belongs to the ATP-dependent AMP-binding enzyme family. It depends on pantetheine 4'-phosphate as a cofactor.

The catalysed reaction is salicylate + holo-[ACP] + ATP = salicyl-[ACP] + AMP + diphosphate. The protein operates within siderophore biosynthesis; pseudomonine biosynthesis. Its function is as follows. Involved in the biosynthesis of the siderophore pseudomonine. Specifically adenylates salicylate and loads it onto its peptidyl carrier domain, via a thioester linkage to the phosphopanthetheine moiety. The chain is Pseudomonine synthase PmsE from Pseudomonas entomophila (strain L48).